A 33-amino-acid polypeptide reads, in one-letter code: Photosystem II reaction center protein Psb30 (33 aa).

A helical membrane pass occupies residues 5-25; the sequence is IVFQLTALLFVVAAGPLVIVL.

The protein belongs to the Psb30/Ycf12 family. As to quaternary structure, PSII is composed of 1 copy each of membrane proteins PsbA, PsbB, PsbC, PsbD, PsbE, PsbF, PsbH, PsbI, PsbJ, PsbK, PsbL, PsbM, PsbT, PsbX, PsbY, PsbZ, Psb30/Ycf12, peripheral proteins of the oxygen-evolving complex and a large number of cofactors. It forms dimeric complexes.

Its subcellular location is the plastid. It localises to the chloroplast thylakoid membrane. Its function is as follows. A core subunit of photosystem II (PSII), probably helps stabilize the reaction center. This Chlorella vulgaris (Green alga) protein is Photosystem II reaction center protein Psb30.